Reading from the N-terminus, the 1009-residue chain is Type VII secretion system accessory factor EsaA (1009 aa).

A run of 6 helical transmembrane segments spans residues I7–V27, I822–F842, V869–I889, K903–L923, S928–L948, and I979–F999.

This sequence belongs to the EsaA family. In terms of assembly, homodimer. Interacts with EssB.

The protein resides in the cell membrane. Component of the type VII secretion system (Ess). Provides together with EssB and other components such as EssC and EssE a secretion platform across the cytoplasmic membrane in the host. This chain is Type VII secretion system accessory factor EsaA, found in Staphylococcus aureus (strain MSSA476).